The following is a 365-amino-acid chain: Ribosomal RNA large subunit methyltransferase F (365 aa).

The interval 1 to 49 is disordered; the sequence is MSKPAVKSVQSATAKTATRAVNIRQKVKAPKQAKPEAKGRVRPSKDKPR. The span at 33–49 shows a compositional bias: basic and acidic residues; the sequence is AKPEAKGRVRPSKDKPR.

This sequence belongs to the methyltransferase superfamily. METTL16/RlmF family.

The protein localises to the cytoplasm. The catalysed reaction is adenosine(1618) in 23S rRNA + S-adenosyl-L-methionine = N(6)-methyladenosine(1618) in 23S rRNA + S-adenosyl-L-homocysteine + H(+). Its function is as follows. Specifically methylates the adenine in position 1618 of 23S rRNA. In Shewanella baltica (strain OS185), this protein is Ribosomal RNA large subunit methyltransferase F.